Here is an 89-residue protein sequence, read N- to C-terminus: Acylphosphatase (89 aa).

Residues 3 to 88 (TLHLQIEGRV…GEYSGFEKRS (86 aa)) enclose the Acylphosphatase-like domain. Catalysis depends on residues Arg18 and Asn36.

The protein belongs to the acylphosphatase family.

The enzyme catalyses an acyl phosphate + H2O = a carboxylate + phosphate + H(+). This chain is Acylphosphatase (acyP), found in Thiobacillus denitrificans (strain ATCC 25259 / T1).